We begin with the raw amino-acid sequence, 352 residues long: DNA polymerase IV (352 aa).

One can recognise a UmuC domain in the interval 4 to 185 (IIHVDMDCFF…LPLSKIPGVG (182 aa)). Mg(2+) is bound by residues Asp-8 and Asp-103. Residue Glu-104 is part of the active site.

Belongs to the DNA polymerase type-Y family. Monomer. Mg(2+) serves as cofactor.

It is found in the cytoplasm. It carries out the reaction DNA(n) + a 2'-deoxyribonucleoside 5'-triphosphate = DNA(n+1) + diphosphate. Its function is as follows. Poorly processive, error-prone DNA polymerase involved in untargeted mutagenesis. Copies undamaged DNA at stalled replication forks, which arise in vivo from mismatched or misaligned primer ends. These misaligned primers can be extended by PolIV. Exhibits no 3'-5' exonuclease (proofreading) activity. May be involved in translesional synthesis, in conjunction with the beta clamp from PolIII. The polypeptide is DNA polymerase IV (Yersinia pseudotuberculosis serotype O:1b (strain IP 31758)).